A 551-amino-acid polypeptide reads, in one-letter code: Membrane protein insertase YidC (551 aa).

The helical transmembrane segment at 3–23 (ANHIRILLLVTIAIMFISLMG) threads the bilayer. Residues 33-55 (NTKQQTSATQNNSHYDNADSSTN) form a disordered region. The next 3 membrane-spanning stretches (helical) occupy residues 361–381 (LVGN…LIFY), 431–451 (LSGC…YWVL), and 504–524 (VMMF…SGLV).

It belongs to the OXA1/ALB3/YidC family. Type 1 subfamily. Interacts with the Sec translocase complex via SecD. Specifically interacts with transmembrane segments of nascent integral membrane proteins during membrane integration.

Its subcellular location is the cell inner membrane. Functionally, required for the insertion and/or proper folding and/or complex formation of integral membrane proteins into the membrane. Involved in integration of membrane proteins that insert both dependently and independently of the Sec translocase complex, as well as at least some lipoproteins. Aids folding of multispanning membrane proteins. The sequence is that of Membrane protein insertase YidC from Francisella tularensis subsp. holarctica (strain OSU18).